Here is a 489-residue protein sequence, read N- to C-terminus: Betaine aldehyde dehydrogenase (489 aa).

The K(+) site is built by threonine 26 and aspartate 93. Position 150–152 (glycine 150–tryptophan 152) interacts with NAD(+). Lysine 162 functions as the Charge relay system in the catalytic mechanism. Lysine 176–glutamate 179 is an NAD(+) binding site. Residue valine 180 coordinates K(+). Position 229–232 (glycine 229–threonine 232) interacts with NAD(+). Leucine 245 serves as a coordination point for K(+). The active-site Proton acceptor is glutamate 251. NAD(+) is bound by residues glycine 253, cysteine 285, and glutamate 386. Cysteine 285 acts as the Nucleophile in catalysis. A Cysteine sulfenic acid (-SOH) modification is found at cysteine 285. K(+)-binding residues include lysine 456 and glycine 459. Glutamate 463 acts as the Charge relay system in catalysis.

The protein belongs to the aldehyde dehydrogenase family. Dimer of dimers. Requires K(+) as cofactor.

The enzyme catalyses betaine aldehyde + NAD(+) + H2O = glycine betaine + NADH + 2 H(+). The protein operates within amine and polyamine biosynthesis; betaine biosynthesis via choline pathway; betaine from betaine aldehyde: step 1/1. Functionally, involved in the biosynthesis of the osmoprotectant glycine betaine. Catalyzes the irreversible oxidation of betaine aldehyde to the corresponding acid. The polypeptide is Betaine aldehyde dehydrogenase (Burkholderia orbicola (strain AU 1054)).